A 70-amino-acid chain; its full sequence is Large ribosomal subunit protein bL31 (70 aa).

C16, C18, C38, and C41 together coordinate Zn(2+).

This sequence belongs to the bacterial ribosomal protein bL31 family. Type A subfamily. In terms of assembly, part of the 50S ribosomal subunit. Requires Zn(2+) as cofactor.

Binds the 23S rRNA. In Mycolicibacterium gilvum (strain PYR-GCK) (Mycobacterium gilvum (strain PYR-GCK)), this protein is Large ribosomal subunit protein bL31.